We begin with the raw amino-acid sequence, 539 residues long: Chitin deacetylase 1 (539 aa).

Positions 1–23 (MARYARVATLAACLLFACALADG) are cleaved as a signal peptide. Residues 42–104 (QELCKDKDAG…WKDAVKNCKL (63 aa)) form the Chitin-binding type-2 domain. Cystine bridges form between Cys80-Cys93, Cys122-Cys134, Cys129-Cys147, Cys141-Cys156, Cys168-Cys180, and Cys173-Cys178. Residues 121-157 (LCQDGFLACGDSTCIERGLFCNGEKDCGDGSDENSCD) enclose the LDL-receptor class A domain. Asp206 contributes to the Zn(2+) binding site. Intrachain disulfides connect Cys230–Cys489, Cys354–Cys361, Cys391–Cys397, Cys497–Cys520, and Cys503–Cys523. Asn244 carries an N-linked (GlcNAc...) asparagine glycan. Zn(2+)-binding residues include His261 and His265. The N-linked (GlcNAc...) asparagine glycan is linked to Asn296.

It belongs to the carbohydrate esterase 4 (CE4) family. Interacts with CPAP3-A1. Zn(2+) serves as cofactor. Highly expressed in epidermis and head. Moderate expression levels in fat body, Malpighian tubule, testis and midgut. Low expression in silk gland and ovary.

Its subcellular location is the secreted. The enzyme catalyses [(1-&gt;4)-N-acetyl-beta-D-glucosaminyl](n) + n H2O = chitosan + n acetate. With respect to regulation, binding to the accessory protein CPAP3-A1 is essential for chitinase activity. In terms of biological role, hydrolyzes the N-acetamido groups of N-acetyl-D-glucosamine residues in chitin. This Bombyx mori (Silk moth) protein is Chitin deacetylase 1.